The chain runs to 848 residues: Aryl hydrocarbon receptor (848 aa).

Met-1 bears the N-acetylmethionine mark. The propeptide occupies 1 to 10; that stretch reads MNSSSANITY. Residues 1–10 show a composition bias toward polar residues; the sequence is MNSSSANITY. Residues 1–39 form a disordered region; the sequence is MNSSSANITYASRKRRKPVQKTVKPIPAEGIKSNPSKRH. 2 short sequence motifs (nuclear localization signal) span residues 13 to 16 and 37 to 42; these read RKRR and KRHRDR. The bHLH domain maps to 27-80; the sequence is PAEGIKSNPSKRHRDRLNTELDRLASLLPFPQDVINKLDKLSVLRLSVSYLRAK. Residues 38–66 form a DNA-binding region; the sequence is RHRDRLNTELDRLASLLPFPQDVINKLDK. Required for maintaining the overall integrity of the AHR:ARNT heterodimer and its transcriptional activity regions lie at residues 50 to 82, 118 to 126, and 266 to 268; these read LASLLPFPQDVINKLDKLSVLRLSVSYLRAKSF, LLQALNGFV, and FAI. Positions 64-72 match the Nuclear export signal motif; sequence LDKLSVLRL. The region spanning 111–181 is the PAS 1 domain; that stretch reads NLQEGEFLLQ…RQLHWALNPS (71 aa). Residues 275–342 enclose the PAS 2 domain; the sequence is PSILEIRTKN…CAESHIRMIK (68 aa). The 39-residue stretch at 348–386 folds into the PAC domain; the sequence is MIVFRLLTKNNRWTWVQSNARLLYKNGRPDYIIVTQRPL. Residues 824-848 are disordered; sequence TTHLQPLHHPSEARPFPDLTSSGFL.

In terms of assembly, homodimer. Heterodimer; efficient DNA binding requires dimerization with another bHLH protein. Interacts with ARNT; the heterodimer ARNT:AHR binds to core DNA sequence 5'-TGCGTG-3' within the dioxin response element (DRE) of target gene promoters and activates their transcription. Binds MYBBP1A. Interacts with coactivators including SRC-1, RIP140 and NOCA7, and with the corepressor SMRT. Interacts with NEDD8 and IVNS1ABP. Interacts with BMAL1. Interacts with HSP90AB1. Interacts with TIPARP; leading to mono-ADP-ribosylation of AHR and subsequent inhibition of AHR. Post-translationally, mono-ADP-ribosylated, leading to inhibit transcription activator activity of AHR. Expressed in all tissues tested including blood, brain, heart, kidney, liver, lung, pancreas and skeletal muscle. Expressed in retinal photoreceptors.

It localises to the cytoplasm. It is found in the nucleus. Its function is as follows. Ligand-activated transcription factor that enables cells to adapt to changing conditions by sensing compounds from the environment, diet, microbiome and cellular metabolism, and which plays important roles in development, immunity and cancer. Upon ligand binding, translocates into the nucleus, where it heterodimerizes with ARNT and induces transcription by binding to xenobiotic response elements (XRE). Regulates a variety of biological processes, including angiogenesis, hematopoiesis, drug and lipid metabolism, cell motility and immune modulation. Xenobiotics can act as ligands: upon xenobiotic-binding, activates the expression of multiple phase I and II xenobiotic chemical metabolizing enzyme genes (such as the CYP1A1 gene). Mediates biochemical and toxic effects of halogenated aromatic hydrocarbons. Next to xenobiotics, natural ligands derived from plants, microbiota, and endogenous metabolism are potent AHR agonists. Tryptophan (Trp) derivatives constitute an important class of endogenous AHR ligands. Acts as a negative regulator of anti-tumor immunity: indoles and kynurenic acid generated by Trp catabolism act as ligand and activate AHR, thereby promoting AHR-driven cancer cell motility and suppressing adaptive immunity. Regulates the circadian clock by inhibiting the basal and circadian expression of the core circadian component PER1. Inhibits PER1 by repressing the CLOCK-BMAL1 heterodimer mediated transcriptional activation of PER1. The heterodimer ARNT:AHR binds to core DNA sequence 5'-TGCGTG-3' within the dioxin response element (DRE) of target gene promoters and activates their transcription. This is Aryl hydrocarbon receptor from Homo sapiens (Human).